An 875-amino-acid polypeptide reads, in one-letter code: Alanine--tRNA ligase (875 aa).

Zn(2+) is bound by residues histidine 567, histidine 571, cysteine 669, and histidine 673.

This sequence belongs to the class-II aminoacyl-tRNA synthetase family. Requires Zn(2+) as cofactor.

It is found in the cytoplasm. It carries out the reaction tRNA(Ala) + L-alanine + ATP = L-alanyl-tRNA(Ala) + AMP + diphosphate. Its function is as follows. Catalyzes the attachment of alanine to tRNA(Ala) in a two-step reaction: alanine is first activated by ATP to form Ala-AMP and then transferred to the acceptor end of tRNA(Ala). Also edits incorrectly charged Ser-tRNA(Ala) and Gly-tRNA(Ala) via its editing domain. This chain is Alanine--tRNA ligase, found in Geobacter sulfurreducens (strain ATCC 51573 / DSM 12127 / PCA).